The chain runs to 261 residues: MAVGKNKRISKGKKGGKKKAADPFAKKDWYDIKAPSVFSVRNVGKTLVTRTQGTKIASEGLEHRVFEISLADLQGDEDHSFRKIRLRAEDIQGKNVLTNFWGMDFTTDKLRSLVRKWQSLIEAHVDVKTTDSYTLRMFCIGFTKKRANQQKRTCYAQSSQIRQIRRKMREIMVNQAQSCDLKDLVQKFIPESIGREIEKATSSIYPLQNVFIRKVKILKAPKFDLGKLMEVHGDYNEDDIGTKLDRPAEEAVAEPTEVIGA.

The segment covering 1–18 (MAVGKNKRISKGKKGGKK) has biased composition (basic residues). Positions 1–20 (MAVGKNKRISKGKKGGKKKA) are disordered.

It belongs to the eukaryotic ribosomal protein eS1 family. In terms of assembly, component of the small ribosomal subunit. Mature ribosomes consist of a small (40S) and a large (60S) subunit. The 40S subunit contains about 33 different proteins and 1 molecule of RNA (18S). The 60S subunit contains about 49 different proteins and 3 molecules of RNA (25S, 5.8S and 5S).

The protein localises to the cytoplasm. This Catharanthus roseus (Madagascar periwinkle) protein is Small ribosomal subunit protein eS1.